We begin with the raw amino-acid sequence, 113 residues long: Hydrogenase maturation factor HypA 1 (113 aa).

His2 contributes to the Ni(2+) binding site. Residues Cys73, Cys76, Cys89, and Cys92 each contribute to the Zn(2+) site.

Belongs to the HypA/HybF family.

Its function is as follows. Involved in the maturation of [NiFe] hydrogenases. Required for nickel insertion into the metal center of the hydrogenase. In Bradyrhizobium diazoefficiens (strain JCM 10833 / BCRC 13528 / IAM 13628 / NBRC 14792 / USDA 110), this protein is Hydrogenase maturation factor HypA 1.